Reading from the N-terminus, the 418-residue chain is Nucleoredoxin (418 aa).

The Thioredoxin domain occupies 109–309 (KYKVTSIPSL…ESNAVQLHEG (201 aa)).

Belongs to the nucleoredoxin family.

It localises to the cytoplasm. Its subcellular location is the cytosol. The protein resides in the nucleus. The enzyme catalyses [protein]-dithiol + NAD(+) = [protein]-disulfide + NADH + H(+). It carries out the reaction [protein]-dithiol + NADP(+) = [protein]-disulfide + NADPH + H(+). In terms of biological role, functions as a redox-dependent negative regulator of the Wnt signaling pathway. The sequence is that of Nucleoredoxin (nxn) from Danio rerio (Zebrafish).